The sequence spans 201 residues: ATP-dependent Clp protease proteolytic subunit (201 aa).

Residue Ser-98 is the Nucleophile of the active site. His-123 is a catalytic residue.

The protein belongs to the peptidase S14 family. In terms of assembly, fourteen ClpP subunits assemble into 2 heptameric rings which stack back to back to give a disk-like structure with a central cavity, resembling the structure of eukaryotic proteasomes.

It is found in the cytoplasm. It catalyses the reaction Hydrolysis of proteins to small peptides in the presence of ATP and magnesium. alpha-casein is the usual test substrate. In the absence of ATP, only oligopeptides shorter than five residues are hydrolyzed (such as succinyl-Leu-Tyr-|-NHMec, and Leu-Tyr-Leu-|-Tyr-Trp, in which cleavage of the -Tyr-|-Leu- and -Tyr-|-Trp bonds also occurs).. Functionally, cleaves peptides in various proteins in a process that requires ATP hydrolysis. Has a chymotrypsin-like activity. Plays a major role in the degradation of misfolded proteins. This is ATP-dependent Clp protease proteolytic subunit from Rickettsia akari (strain Hartford).